A 406-amino-acid polypeptide reads, in one-letter code: FBD-associated F-box protein At1g60410 (406 aa).

The F-box domain occupies 9 to 59 (KDRLSDLPCHLLCRILSNLSTKESVRTSVLSPRWSNLWSLVSVLDLDFQDF). Residues 355 to 405 (MEEIKLSPVPQCVLSSLDFLQLKAPSTPSKMKLATYFRKKCTRLTKMLLSG) form the FBD domain.

The protein is FBD-associated F-box protein At1g60410 of Arabidopsis thaliana (Mouse-ear cress).